A 347-amino-acid polypeptide reads, in one-letter code: D-alanine--D-alanine ligase (347 aa).

The 203-residue stretch at Lys131–Asp333 folds into the ATP-grasp domain. Glu161–Glu216 serves as a coordination point for ATP. Residues Asp287, Glu300, and Asn302 each contribute to the Mg(2+) site.

The protein belongs to the D-alanine--D-alanine ligase family. The cofactor is Mg(2+). Mn(2+) is required as a cofactor.

The protein resides in the cytoplasm. The enzyme catalyses 2 D-alanine + ATP = D-alanyl-D-alanine + ADP + phosphate + H(+). The protein operates within cell wall biogenesis; peptidoglycan biosynthesis. Cell wall formation. The protein is D-alanine--D-alanine ligase of Streptococcus pneumoniae serotype 19F (strain G54).